A 410-amino-acid polypeptide reads, in one-letter code: Tryptophan synthase beta chain (410 aa).

Lys-98 bears the N6-(pyridoxal phosphate)lysine mark.

The protein belongs to the TrpB family. In terms of assembly, tetramer of two alpha and two beta chains. It depends on pyridoxal 5'-phosphate as a cofactor.

The catalysed reaction is (1S,2R)-1-C-(indol-3-yl)glycerol 3-phosphate + L-serine = D-glyceraldehyde 3-phosphate + L-tryptophan + H2O. The protein operates within amino-acid biosynthesis; L-tryptophan biosynthesis; L-tryptophan from chorismate: step 5/5. Functionally, the beta subunit is responsible for the synthesis of L-tryptophan from indole and L-serine. This Roseobacter denitrificans (strain ATCC 33942 / OCh 114) (Erythrobacter sp. (strain OCh 114)) protein is Tryptophan synthase beta chain.